The following is a 639-amino-acid chain: Protein phosphatase 2C 35 (639 aa).

The PPM-type phosphatase domain occupies 227–630 (GGDPCGLQWA…DDVSVIVISL (404 aa)). Mn(2+)-binding residues include Asp-262 and Gly-263. The interval 295 to 341 (QNVQHDQRPDQPGSAPSTTASDNQDQWGRRRRTRRSRPPRGADDDQR) is disordered. Over residues 308 to 320 (SAPSTTASDNQDQ) the composition is skewed to polar residues. Over residues 323-332 (RRRRTRRSRP) the composition is skewed to basic residues. Mn(2+) contacts are provided by Asp-558 and Asp-621.

The protein belongs to the PP2C family. Interacts with XA21 (via juxtamembrane and kinase domains). The cofactor is Mg(2+). Requires Mn(2+) as cofactor.

It localises to the cell membrane. The enzyme catalyses O-phospho-L-seryl-[protein] + H2O = L-seryl-[protein] + phosphate. It carries out the reaction O-phospho-L-threonyl-[protein] + H2O = L-threonyl-[protein] + phosphate. Its function is as follows. Protein phosphatase that acts on XA21 pathogen recognition receptor. Negatively regulates cell death and XA21-mediated innate immunity. This Oryza sativa subsp. japonica (Rice) protein is Protein phosphatase 2C 35 (XB15).